A 101-amino-acid polypeptide reads, in one-letter code: Cilia- and flagella-associated protein 141 (101 aa).

In terms of assembly, microtubule inner protein component of sperm flagellar doublet microtubules. Expressed in trachea multiciliated cells.

The protein localises to the cytoplasm. Its subcellular location is the cytoskeleton. It localises to the cilium axoneme. It is found in the flagellum axoneme. Its function is as follows. Microtubule inner protein (MIP) part of the dynein-decorated doublet microtubules (DMTs) in cilia axoneme, which is required for motile cilia beating. This is Cilia- and flagella-associated protein 141 from Bos taurus (Bovine).